Reading from the N-terminus, the 313-residue chain is uncharacterized protein (313 aa).

This is an uncharacterized protein from Orgyia pseudotsugata multicapsid polyhedrosis virus (OpMNPV).